The primary structure comprises 354 residues: Isopentenyl-diphosphate delta-isomerase (354 aa).

6-7 (RK) is a binding site for substrate. FMN is bound by residues 63–65 (AMT), S93, and N122. Substrate is bound at residue 93–95 (SQR). Q160 is a substrate binding site. A Mg(2+)-binding site is contributed by E161. FMN-binding positions include K192, T221, 273–275 (GIR), and 294–295 (SQ).

This sequence belongs to the IPP isomerase type 2 family. As to quaternary structure, homooctamer. Dimer of tetramers. Requires FMN as cofactor. It depends on NADPH as a cofactor. Mg(2+) serves as cofactor.

The protein resides in the cytoplasm. The catalysed reaction is isopentenyl diphosphate = dimethylallyl diphosphate. In terms of biological role, involved in the biosynthesis of isoprenoids. Catalyzes the 1,3-allylic rearrangement of the homoallylic substrate isopentenyl (IPP) to its allylic isomer, dimethylallyl diphosphate (DMAPP). This is Isopentenyl-diphosphate delta-isomerase from Pyrobaculum islandicum (strain DSM 4184 / JCM 9189 / GEO3).